The following is a 365-amino-acid chain: tRNA/tmRNA (uracil-C(5))-methyltransferase (365 aa).

5 residues coordinate S-adenosyl-L-methionine: glutamine 189, tyrosine 217, asparagine 222, glutamate 238, and aspartate 298. The Nucleophile role is filled by cysteine 323. The active-site Proton acceptor is glutamate 357.

Belongs to the class I-like SAM-binding methyltransferase superfamily. RNA M5U methyltransferase family. TrmA subfamily.

It carries out the reaction uridine(54) in tRNA + S-adenosyl-L-methionine = 5-methyluridine(54) in tRNA + S-adenosyl-L-homocysteine + H(+). It catalyses the reaction uridine(341) in tmRNA + S-adenosyl-L-methionine = 5-methyluridine(341) in tmRNA + S-adenosyl-L-homocysteine + H(+). Its function is as follows. Dual-specificity methyltransferase that catalyzes the formation of 5-methyluridine at position 54 (m5U54) in all tRNAs, and that of position 341 (m5U341) in tmRNA (transfer-mRNA). In Shewanella baltica (strain OS155 / ATCC BAA-1091), this protein is tRNA/tmRNA (uracil-C(5))-methyltransferase.